The chain runs to 272 residues: CDAN1-interacting nuclease 1 (272 aa).

It is found in the nucleus. The protein localises to the cytoplasm. Its function is as follows. May play a role in erythroid cell differentiation. In Gallus gallus (Chicken), this protein is CDAN1-interacting nuclease 1 (CDIN1).